Here is a 421-residue protein sequence, read N- to C-terminus: Succinate--CoA ligase [ADP-forming] subunit beta, mitochondrial (421 aa).

A mitochondrion-targeting transit peptide spans 1–26 (MRGLVNKLVSRSLSISGKWQNQQLRR). An ATP-grasp domain is found at 35 to 278 (AELMGKYGVN…PTQEDPREVA (244 aa)). Residues K74, 81–83 (GRG), and E141 each bind ATP. N233 and D247 together coordinate Mg(2+). Substrate-binding positions include N298 and 355-357 (GIM).

Belongs to the succinate/malate CoA ligase beta subunit family. As to quaternary structure, heterodimer of an alpha and a beta subunit. Mg(2+) is required as a cofactor.

Its subcellular location is the mitochondrion. The enzyme catalyses succinate + ATP + CoA = succinyl-CoA + ADP + phosphate. It participates in carbohydrate metabolism; tricarboxylic acid cycle; succinate from succinyl-CoA (ligase route): step 1/1. In terms of biological role, succinyl-CoA synthetase functions in the citric acid cycle (TCA), coupling the hydrolysis of succinyl-CoA to the synthesis of ATP and thus represents the only step of substrate-level phosphorylation in the TCA. The beta subunit provides nucleotide specificity of the enzyme and binds the substrate succinate, while the binding sites for coenzyme A and phosphate are found in the alpha subunit. This chain is Succinate--CoA ligase [ADP-forming] subunit beta, mitochondrial, found in Arabidopsis thaliana (Mouse-ear cress).